We begin with the raw amino-acid sequence, 356 residues long: Probable G-protein coupled receptor 32 (356 aa).

Residues 1–44 (MNGVSEGTRGCSDRQPGVLTRDRSCSRKMNSSGCLSEEVGSLRP) are Extracellular-facing. Residue asparagine 30 is glycosylated (N-linked (GlcNAc...) asparagine). A helical transmembrane segment spans residues 45–67 (LTVVILSASIVVGVLGNGLVLWM). At 68–78 (TVFRMARTVST) the chain is on the cytoplasmic side. A helical membrane pass occupies residues 79–100 (VCFFHLALADFMLSLSLPIAMY). At 101–116 (YIVSRQWLLGEWACKL) the chain is on the extracellular side. A disulfide bond links cysteine 114 and cysteine 191. Residues 117–137 (YITFVFLSYFASNCLLVFISV) form a helical membrane-spanning segment. Over 138–156 (DRCISVLYPVWALNHRTVQ) the chain is Cytoplasmic. The helical transmembrane segment at 157–178 (RASWLAFGVWLLAAALCSAHLK) threads the bilayer. Over 179–220 (FRTTRKWNGCTHCYLAFNSDNETAQIWIEGVVEGHIIGTIGH) the chain is Extracellular. The N-linked (GlcNAc...) asparagine glycan is linked to asparagine 199. A helical membrane pass occupies residues 221 to 241 (FLLGFLGPLAIIGTCAHLIRA). Topologically, residues 242–257 (KLLREGWVHANRPKRL) are cytoplasmic. A helical transmembrane segment spans residues 258 to 280 (LLVLVSAFFIFWSPFNVVLLVHL). At 281–300 (WRRVMLKEIYHPRMLLILQA) the chain is on the extracellular side. Residues 301 to 320 (SFALGCVNSSLNPFLYVFVG) traverse the membrane as a helical segment. Topologically, residues 321–356 (RDFQEKFFQSLTSALARAFGEEEFLSSCPRGNAPRE) are cytoplasmic.

Belongs to the G-protein coupled receptor 1 family. In terms of tissue distribution, expressed in resting primary human macrophages.

It localises to the cell membrane. G-protein coupled receptor that binds to several ligands including resolvin D1 (RvD1) with high affinity, leading to rapid and transient activation of numerous intracellular signaling pathways. In macrophages, enhances the RvD1-stimulated phagocytic and clearance functions. Macrophages migrate less toward different chemoattractant stimuli but phagocytose more microbial particles. Prevents the increase in Ca(2+) and activation of ERK1/2 used by histamine and its H1 receptor subtype to induce goblet cell secretion by activating PKC and GRK2 to counter-regulate the histamine receptor. In Homo sapiens (Human), this protein is Probable G-protein coupled receptor 32 (GPR32).